Here is a 358-residue protein sequence, read N- to C-terminus: Alanine racemase (358 aa).

The active-site Proton acceptor; specific for D-alanine is Lys-35. N6-(pyridoxal phosphate)lysine is present on Lys-35. Arg-130 contacts substrate. Residue Tyr-255 is the Proton acceptor; specific for L-alanine of the active site. Met-303 contributes to the substrate binding site.

Belongs to the alanine racemase family. The cofactor is pyridoxal 5'-phosphate.

The catalysed reaction is L-alanine = D-alanine. It functions in the pathway amino-acid biosynthesis; D-alanine biosynthesis; D-alanine from L-alanine: step 1/1. Catalyzes the interconversion of L-alanine and D-alanine. May also act on other amino acids. This is Alanine racemase (alr) from Shewanella baltica (strain OS223).